The chain runs to 347 residues: Eukaryotic translation initiation factor 3 subunit I (347 aa).

WD repeat units follow at residues 8–47, 50–89, 150–190, 192–233, and 289–328; these read GHER…RLGT, DHSG…AVHS, EQAT…VQAK, IHEK…KTYK, and GHFG…FDFK.

Belongs to the eIF-3 subunit I family. As to quaternary structure, component of the eukaryotic translation initiation factor 3 (eIF-3) complex.

The protein resides in the cytoplasm. Component of the eukaryotic translation initiation factor 3 (eIF-3) complex, which is involved in protein synthesis of a specialized repertoire of mRNAs and, together with other initiation factors, stimulates binding of mRNA and methionyl-tRNAi to the 40S ribosome. The eIF-3 complex specifically targets and initiates translation of a subset of mRNAs involved in cell proliferation. In Kluyveromyces lactis (strain ATCC 8585 / CBS 2359 / DSM 70799 / NBRC 1267 / NRRL Y-1140 / WM37) (Yeast), this protein is Eukaryotic translation initiation factor 3 subunit I.